Consider the following 139-residue polypeptide: uncharacterized protein (139 aa).

Helical transmembrane passes span 35-55 (AYFK…AAAA) and 119-139 (CCLF…VFCV).

The protein resides in the membrane. This is an uncharacterized protein from Saccharomyces cerevisiae (strain ATCC 204508 / S288c) (Baker's yeast).